The chain runs to 439 residues: Divalent metal cation transporter MntH 1 (439 aa).

A run of 9 helical transmembrane segments spans residues 64–84, 139–161, 171–191, 214–234, 262–282, 300–320, 359–379, 380–400, and 418–438; these read FGYALLFVVVLASFSGMLLQS, LLGVSITTGVVLTAFDTLIVLAL, AIVLGLIATIGACFFVELVLI, PLYLAIGILGATVMPHNLYLH, IGSLSLALLVNAAILILAAAA, LLDPLVGGALASFLFGFALLA, LVPALIGVLWLGEAAVGKLLV, LSQVVLSLQLPFALWPLIRFS, and LAWSLFGLISAANLTLLYFWF.

The protein belongs to the NRAMP family.

It localises to the cell inner membrane. In terms of biological role, h(+)-stimulated, divalent metal cation uptake system. In Pseudomonas aeruginosa (strain ATCC 15692 / DSM 22644 / CIP 104116 / JCM 14847 / LMG 12228 / 1C / PRS 101 / PAO1), this protein is Divalent metal cation transporter MntH 1.